The sequence spans 272 residues: 1,4-dihydroxy-2-naphthoyl-CoA synthase (272 aa).

Residues R33, 72–76 (SGGDQ), Y84, 116–120 (YAIGG), T142, S148, Y245, and K260 contribute to the substrate site. 141-143 (QTG) provides a ligand contact to hydrogencarbonate.

It belongs to the enoyl-CoA hydratase/isomerase family. MenB subfamily. Hydrogencarbonate serves as cofactor.

It carries out the reaction 2-succinylbenzoyl-CoA + H(+) = 1,4-dihydroxy-2-naphthoyl-CoA + H2O. The protein operates within quinol/quinone metabolism; 1,4-dihydroxy-2-naphthoate biosynthesis; 1,4-dihydroxy-2-naphthoate from chorismate: step 6/7. It participates in quinol/quinone metabolism; menaquinone biosynthesis. Its function is as follows. Converts o-succinylbenzoyl-CoA (OSB-CoA) to 1,4-dihydroxy-2-naphthoyl-CoA (DHNA-CoA). The protein is 1,4-dihydroxy-2-naphthoyl-CoA synthase of Staphylococcus epidermidis (strain ATCC 12228 / FDA PCI 1200).